A 434-amino-acid polypeptide reads, in one-letter code: 3-phosphoshikimate 1-carboxyvinyltransferase (434 aa).

3-phosphoshikimate-binding residues include K22, S23, and R27. Position 22 (K22) interacts with phosphoenolpyruvate. Phosphoenolpyruvate is bound by residues G93 and R121. Residues S168, S169, Q170, S199, D320, and K347 each coordinate 3-phosphoshikimate. Q170 is a phosphoenolpyruvate binding site. D320 (proton acceptor) is an active-site residue. 3 residues coordinate phosphoenolpyruvate: R351, R394, and K419.

The protein belongs to the EPSP synthase family. Monomer.

The protein localises to the cytoplasm. It carries out the reaction 3-phosphoshikimate + phosphoenolpyruvate = 5-O-(1-carboxyvinyl)-3-phosphoshikimate + phosphate. Its pathway is metabolic intermediate biosynthesis; chorismate biosynthesis; chorismate from D-erythrose 4-phosphate and phosphoenolpyruvate: step 6/7. Its function is as follows. Catalyzes the transfer of the enolpyruvyl moiety of phosphoenolpyruvate (PEP) to the 5-hydroxyl of shikimate-3-phosphate (S3P) to produce enolpyruvyl shikimate-3-phosphate and inorganic phosphate. In Burkholderia cenocepacia (strain HI2424), this protein is 3-phosphoshikimate 1-carboxyvinyltransferase.